The sequence spans 404 residues: Argininosuccinate synthase (404 aa).

ATP-binding positions include 10–18 (AYSGGLDTS) and A37. L-citrulline-binding residues include Y90 and S95. G120 contacts ATP. L-aspartate is bound by residues T122, N126, and D127. N126 provides a ligand contact to L-citrulline. 5 residues coordinate L-citrulline: R130, S181, S190, E266, and Y278.

This sequence belongs to the argininosuccinate synthase family. Type 1 subfamily. As to quaternary structure, homotetramer.

It localises to the cytoplasm. The catalysed reaction is L-citrulline + L-aspartate + ATP = 2-(N(omega)-L-arginino)succinate + AMP + diphosphate + H(+). It functions in the pathway amino-acid biosynthesis; L-arginine biosynthesis; L-arginine from L-ornithine and carbamoyl phosphate: step 2/3. In Erythrobacter litoralis (strain HTCC2594), this protein is Argininosuccinate synthase.